The chain runs to 363 residues: 3-isopropylmalate dehydrogenase (363 aa).

Gly-78–Glu-91 provides a ligand contact to NAD(+). Substrate-binding residues include Arg-99, Arg-109, Arg-138, and Asp-227. Residues Asp-227, Asp-251, and Asp-255 each contribute to the Mg(2+) site. Residue Gly-285–Asn-297 coordinates NAD(+).

This sequence belongs to the isocitrate and isopropylmalate dehydrogenases family. LeuB type 1 subfamily. Homodimer. Mg(2+) serves as cofactor. Requires Mn(2+) as cofactor.

It is found in the cytoplasm. The enzyme catalyses (2R,3S)-3-isopropylmalate + NAD(+) = 4-methyl-2-oxopentanoate + CO2 + NADH. It participates in amino-acid biosynthesis; L-leucine biosynthesis; L-leucine from 3-methyl-2-oxobutanoate: step 3/4. Functionally, catalyzes the oxidation of 3-carboxy-2-hydroxy-4-methylpentanoate (3-isopropylmalate) to 3-carboxy-4-methyl-2-oxopentanoate. The product decarboxylates to 4-methyl-2 oxopentanoate. The protein is 3-isopropylmalate dehydrogenase of Salmonella typhi.